We begin with the raw amino-acid sequence, 123 residues long: Large ribosomal subunit protein uL14c (123 aa).

This sequence belongs to the universal ribosomal protein uL14 family. As to quaternary structure, part of the 50S ribosomal subunit. Interacts with IOJAP.

It localises to the plastid. The protein localises to the chloroplast. Its function is as follows. Binds to 23S rRNA. The protein is Large ribosomal subunit protein uL14c of Zea mays (Maize).